Consider the following 328-residue polypeptide: Extracellular exo-alpha-(1-&gt;5)-L-arabinofuranosidase (328 aa).

A signal peptide (tat-tyPE signal) is located at residues Met1–Ala43. Residue Asp60 is the Proton acceptor of the active site. Glu236 functions as the Proton donor in the catalytic mechanism.

Belongs to the glycosyl hydrolase 43 family. Post-translationally, predicted to be exported by the Tat system. The position of the signal peptide cleavage has been experimentally proven.

It is found in the secreted. It carries out the reaction Hydrolysis of terminal non-reducing alpha-L-arabinofuranoside residues in alpha-L-arabinosides.. It functions in the pathway glycan metabolism; L-arabinan degradation. Involved in the degradation of arabinan and is a key enzyme in the complete degradation of the plant cell wall. Catalyzes only the cleavage of terminal alpha-(1-&gt;5) arabinofuranosyl bonds of arabinan present in the arabinofuranosyl polysaccharides or oligosaccharides. It cannot act on other arabinose-containing polysaccharides and arabinoxylo-oligosaccharides. The protein is Extracellular exo-alpha-(1-&gt;5)-L-arabinofuranosidase of Streptomyces chartreusis.